A 246-amino-acid chain; its full sequence is tRNA pseudouridine synthase A (246 aa).

Catalysis depends on Asp52, which acts as the Nucleophile. Tyr111 lines the substrate pocket.

This sequence belongs to the tRNA pseudouridine synthase TruA family. As to quaternary structure, homodimer.

The catalysed reaction is uridine(38/39/40) in tRNA = pseudouridine(38/39/40) in tRNA. Formation of pseudouridine at positions 38, 39 and 40 in the anticodon stem and loop of transfer RNAs. The chain is tRNA pseudouridine synthase A from Borrelia garinii subsp. bavariensis (strain ATCC BAA-2496 / DSM 23469 / PBi) (Borreliella bavariensis).